Consider the following 215-residue polypeptide: Ribose-5-phosphate isomerase A (215 aa).

Residues 26–29 (TGST), 79–82 (DGAD), and 92–95 (KGGG) contribute to the substrate site. The Proton acceptor role is filled by Glu-101. Lys-119 serves as a coordination point for substrate.

This sequence belongs to the ribose 5-phosphate isomerase family. Homodimer.

It carries out the reaction aldehydo-D-ribose 5-phosphate = D-ribulose 5-phosphate. The protein operates within carbohydrate degradation; pentose phosphate pathway; D-ribose 5-phosphate from D-ribulose 5-phosphate (non-oxidative stage): step 1/1. Functionally, catalyzes the reversible conversion of ribose-5-phosphate to ribulose 5-phosphate. This Xylella fastidiosa (strain M12) protein is Ribose-5-phosphate isomerase A.